The sequence spans 927 residues: Band 3 anion transport protein (927 aa).

Met-1 carries the post-translational modification N-acetylmethionine. Residues 1–420 are Cytoplasmic-facing; sequence MGDMQDHEKV…LSDITDALSP (420 aa). Position 18 is a phosphoserine (Ser-18). A phosphotyrosine mark is found at Tyr-31 and Tyr-56. Residues 69–303 are globular; sequence SQVYVELQEL…LGRAAATLMT (235 aa). Positions 190–199 are interaction with ANK1; sequence AVLTRSGAPS. Phosphoserine is present on residues Ser-199 and Ser-222. A dimerization arm region spans residues 317 to 370; it reads RGELLSSLDSFLDCSLVLPPTEAPSEKALLNLVPVQKELLRKRYLPRPAKPDPN. Residues 367-390 are disordered; it reads PDPNLYEALDGGKEGPGDEDDPLR. The residue at position 372 (Tyr-372) is a Phosphotyrosine. A helical transmembrane segment spans residues 421–444; the sequence is QVLAAVIFIYFAALSPAVTFGGLL. The Extracellular portion of the chain corresponds to 445–452; it reads GEKTRNLM. Residues 453-473 traverse the membrane as a helical segment; that stretch reads GVSELLISTAVQGILFALLGA. The Cytoplasmic portion of the chain corresponds to 474–476; sequence QPL. The chain crosses the membrane as a discontinuously helical span at residues 477–493; it reads LVLGFSGPLLVFEEAFY. The Extracellular segment spans residues 494 to 502; that stretch reads SFCESNNLE. The helical transmembrane segment at 503–523 threads the bilayer; it reads YIVGRAWIGFWLILLVVLVVA. Over 524–535 the chain is Cytoplasmic; it reads FEGSFLVQYISR. A helical transmembrane segment spans residues 536 to 558; the sequence is YTQEIFSFLISLIFIYETFSKLI. At 559–586 the chain is on the extracellular side; it reads KIFQDYPLQESYAPVVMKPKPQGPVPNT. A helical membrane pass occupies residues 587–607; sequence ALLSLVLMVGTFLLAMMLRKF. Over 608-618 the chain is Cytoplasmic; sequence KNSTYFPGKLR. Residues 619–639 traverse the membrane as a helical segment; that stretch reads RVIGDFGVPISILIMVLVDTF. At 640 to 679 the chain is on the extracellular side; that stretch reads IKNTYTQKLSVPDGLKVSNSSARGWVIHPLGLYNHFPKWM. A glycan (N-linked (GlcNAc...) asparagine) is linked at Asn-658. A helical membrane pass occupies residues 680 to 700; sequence MFASVLPALLVFILIFLESQI. Over 701–716 the chain is Cytoplasmic; it reads TTLIVSKPERKMIKGS. The chain crosses the membrane as a helical span at residues 717–735; sequence GFHLDLLLVVGMGGVAALF. The chain crosses the membrane as a discontinuously helical span at residues 736-753; that stretch reads GMPWLSATTVRSVTHANA. Over 754-776 the chain is Cytoplasmic; that stretch reads LTVMGKASGPGAAAQIQEVKEQR. Transmembrane regions (helical) follow at residues 777-797 and 798-816; these read ISGLLVSVLVGLSILMEPILS and RIPLAVLFGIFLYMGITSL. The Cytoplasmic portion of the chain corresponds to 817–854; it reads SGIQLFDRILLLFKPPKYHPDVPFVKRVKTWRMHLFTG. An intramembrane region (discontinuously helical) is located at residues 855–885; it reads IQIICLAVLWVVKSTPASLALPFVLILTVPL. Cys-859 carries the S-palmitoyl cysteine lipid modification. Over 886–927 the chain is Cytoplasmic; it reads RRLLLPLIFRELELQCLDGDDAKVTFDEAEGLDEYDEVPMPV. Residue Tyr-920 is modified to Phosphotyrosine.

The protein belongs to the anion exchanger (TC 2.A.31) family. A dimer in solution, but in its membrane environment, it exists primarily as a mixture of dimers and tetramers and spans the membrane asymmetrically. Component of the ankyrin-1 complex in the erythrocyte, composed of ANK1, RHCE, RHAG, SLC4A1, EPB42, GYPA, GYPB and AQP1. Interacts with STOM; this interaction positively regulates SLC4A1 activity. Interacts with GYPA; a GYPA monomer is bound at each end of the SLC4A1 dimer forming a heterotetramer. Three SLC4A1 dimers (Band 3-I, Band 3-II and Band 3-III) participates in the ankyrin-1 complex. Interacts (via the cytoplasmic domain) with EPB42; this interaction is mediated by the SLC4A1 Band 3-I dimer. Interacts (via the cytoplasmic domain) directly with ANK1; this interaction is mediated by the SLC4A1 Band 3-II and Band 3-III dimers. As to quaternary structure, interacts with TMEM139. In terms of tissue distribution, kidney.

The protein localises to the cell membrane. It is found in the basolateral cell membrane. The catalysed reaction is hydrogencarbonate(in) + chloride(out) = hydrogencarbonate(out) + chloride(in). In terms of biological role, functions both as a transporter that mediates electroneutral anion exchange across the cell membrane and as a structural protein. Component of the ankyrin-1 complex of the erythrocyte membrane; required for normal flexibility and stability of the erythrocyte membrane and for normal erythrocyte shape via the interactions of its cytoplasmic domain with cytoskeletal proteins, glycolytic enzymes, and hemoglobin. Functions as a transporter that mediates the 1:1 exchange of inorganic anions across the erythrocyte membrane. Mediates chloride-bicarbonate exchange in the kidney, and is required for normal acidification of the urine. This is Band 3 anion transport protein from Rattus norvegicus (Rat).